The following is a 257-amino-acid chain: Hydroxyacylglutathione hydrolase (257 aa).

Zn(2+) is bound by residues His54, His56, Asp58, His59, His113, Asp137, and His175.

This sequence belongs to the metallo-beta-lactamase superfamily. Glyoxalase II family. In terms of assembly, monomer. Zn(2+) is required as a cofactor.

The catalysed reaction is an S-(2-hydroxyacyl)glutathione + H2O = a 2-hydroxy carboxylate + glutathione + H(+). It functions in the pathway secondary metabolite metabolism; methylglyoxal degradation; (R)-lactate from methylglyoxal: step 2/2. Functionally, thiolesterase that catalyzes the hydrolysis of S-D-lactoyl-glutathione to form glutathione and D-lactic acid. The sequence is that of Hydroxyacylglutathione hydrolase from Acaryochloris marina (strain MBIC 11017).